The following is a 650-amino-acid chain: Serine/threonine-protein phosphatase with EF-hands 1 (650 aa).

The IQ domain maps to 16 to 45; it reads VIKAALVIQNWYRRYRARLRVRQHYALAIF. The interval 124 to 456 is catalytic; the sequence is IHILLQAFKQ…PQFFQYQVTS (333 aa). Mn(2+)-binding residues include Asp175, His177, Asp204, and Asn236. Catalysis depends on His237, which acts as the Proton donor. Residue His288 coordinates Mn(2+). The disordered stretch occupies residues 315 to 348; the sequence is PVLGNQETGEKRNKSASNYVEPRKVEPDKTPSED. Residues 335 to 348 are compositionally biased toward basic and acidic residues; sequence EPRKVEPDKTPSED. Mn(2+) is bound at residue His404. EF-hand domains lie at 484-519, 567-602, and 607-642; these read SRKT…ILGL, RYRS…FNAH, and IDDS…VHKY. Positions 497, 499, 501, 503, 508, 580, 582, 584, 591, 620, 622, 624, 626, and 631 each coordinate Ca(2+).

The protein belongs to the PPP phosphatase family. Mn(2+) serves as cofactor. It depends on Mg(2+) as a cofactor. In terms of tissue distribution, in the embryo it is almost exclusively expressed in the peripheral nervous system, within sensory neurons of cranial and dorsal root ganglia. Otherwise found in fetal inner ear and a small group of neurons in the midbrain/pons junction.

It carries out the reaction O-phospho-L-seryl-[protein] + H2O = L-seryl-[protein] + phosphate. The catalysed reaction is O-phospho-L-threonyl-[protein] + H2O = L-threonyl-[protein] + phosphate. Activated by calcium. Its function is as follows. May have a role in the recovery or adaptation response of photoreceptors. May have a role in diverse sensory neurons and in development. This chain is Serine/threonine-protein phosphatase with EF-hands 1 (Ppef1), found in Mus musculus (Mouse).